The primary structure comprises 545 residues: CTP synthase (545 aa).

Positions 1–266 (MTTRYIFVTG…DELVVKRFGI (266 aa)) are amidoligase domain. Ser14 contacts CTP. UTP is bound at residue Ser14. Residues 15–20 (SLGKGI) and Asp72 contribute to the ATP site. 2 residues coordinate Mg(2+): Asp72 and Glu140. Residues 147 to 149 (DIE), 187 to 192 (KTKPTQ), and Lys223 contribute to the CTP site. Residues 187 to 192 (KTKPTQ) and Lys223 each bind UTP. 239–241 (KDV) contributes to the ATP binding site. Residues 291–542 (TIGMVGKYIE…VAAATAYQKR (252 aa)) form the Glutamine amidotransferase type-1 domain. Gly352 contributes to the L-glutamine binding site. Cys379 (nucleophile; for glutamine hydrolysis) is an active-site residue. Residues 380–383 (LGLQ), Glu403, and Arg470 contribute to the L-glutamine site. Catalysis depends on residues His515 and Glu517.

It belongs to the CTP synthase family. As to quaternary structure, homotetramer.

It catalyses the reaction UTP + L-glutamine + ATP + H2O = CTP + L-glutamate + ADP + phosphate + 2 H(+). The catalysed reaction is L-glutamine + H2O = L-glutamate + NH4(+). It carries out the reaction UTP + NH4(+) + ATP = CTP + ADP + phosphate + 2 H(+). It functions in the pathway pyrimidine metabolism; CTP biosynthesis via de novo pathway; CTP from UDP: step 2/2. With respect to regulation, allosterically activated by GTP, when glutamine is the substrate; GTP has no effect on the reaction when ammonia is the substrate. The allosteric effector GTP functions by stabilizing the protein conformation that binds the tetrahedral intermediate(s) formed during glutamine hydrolysis. Inhibited by the product CTP, via allosteric rather than competitive inhibition. Functionally, catalyzes the ATP-dependent amination of UTP to CTP with either L-glutamine or ammonia as the source of nitrogen. Regulates intracellular CTP levels through interactions with the four ribonucleotide triphosphates. In Shewanella sediminis (strain HAW-EB3), this protein is CTP synthase.